Here is a 600-residue protein sequence, read N- to C-terminus: Elongation factor 4 (600 aa).

Residues 4 to 186 (SKIRNFSIIA…AIVDKIPPPS (183 aa)) form the tr-type G domain. GTP contacts are provided by residues 16–21 (DHGKST) and 133–136 (NKID).

This sequence belongs to the TRAFAC class translation factor GTPase superfamily. Classic translation factor GTPase family. LepA subfamily.

It localises to the cell membrane. The catalysed reaction is GTP + H2O = GDP + phosphate + H(+). Functionally, required for accurate and efficient protein synthesis under certain stress conditions. May act as a fidelity factor of the translation reaction, by catalyzing a one-codon backward translocation of tRNAs on improperly translocated ribosomes. Back-translocation proceeds from a post-translocation (POST) complex to a pre-translocation (PRE) complex, thus giving elongation factor G a second chance to translocate the tRNAs correctly. Binds to ribosomes in a GTP-dependent manner. In Mycoplasma capricolum subsp. capricolum (strain California kid / ATCC 27343 / NCTC 10154), this protein is Elongation factor 4.